The following is a 271-amino-acid chain: Interleukin-1 alpha (271 aa).

The propeptide occupies methionine 1–arginine 112. An N6-acetyllysine modification is found at lysine 82. Residues lysine 82 and lysine 83 are each lipidated (N6-myristoyl lysine). A nuclear localization signal (NLS) region spans residues lysine 82–leucine 86. Phosphoserine is present on serine 87. 2 N-linked (GlcNAc...) asparagine glycosylation sites follow: asparagine 102 and asparagine 141.

It belongs to the IL-1 family. In terms of assembly, monomer. Interacts with TMED10; the interaction mediates the translocation from the cytoplasm into the ERGIC (endoplasmic reticulum-Golgi intermediate compartment) and thereby secretion. Interacts with IL1R1. Interacts with S100A13; this interaction is the first step in the export of IL1A, followed by direct translocation of this complex across the plasma membrane. Post-translationally, acetylated within its nuclear localization sequence, which impacts subcellular localization. Proteolytic processed by CAPN1 in a calcium-dependent manner. Cleavage from 31 kDa precursor to 18 kDa biologically active molecules. In terms of processing, phosphorylated. Phosphorylation greatly enhances susceptibility to digestion and promotes the conversion of pre-IL1A alpha to the biologically active IL1A.

It localises to the nucleus. It is found in the cytoplasm. Its subcellular location is the secreted. In terms of biological role, cytokine constitutively present intracellularly in nearly all resting non-hematopoietic cells that plays an important role in inflammation and bridges the innate and adaptive immune systems. After binding to its receptor IL1R1 together with its accessory protein IL1RAP, forms the high affinity interleukin-1 receptor complex. Signaling involves the recruitment of adapter molecules such as MYD88, IRAK1 or IRAK4. In turn, mediates the activation of NF-kappa-B and the three MAPK pathways p38, p42/p44 and JNK pathways. Within the cell, acts as an alarmin and cell death results in its liberation in the extracellular space after disruption of the cell membrane to induce inflammation and alert the host to injury or damage. In addition to its role as a danger signal, which occurs when the cytokine is passively released by cell necrosis, directly senses DNA damage and acts as a signal for genotoxic stress without loss of cell integrity. This Homo sapiens (Human) protein is Interleukin-1 alpha (IL1A).